A 660-amino-acid polypeptide reads, in one-letter code: Putative ABC transporter ATP-binding MG390 homolog (660 aa).

The Peptidase C39 domain occupies 6–126 (QEQPNECGIC…KQWTGYAATV (121 aa)). Residue cysteine 12 is part of the active site. 6 consecutive transmembrane segments (helical) span residues 150–170 (LIIFYVFIELIIIGISTLLAT), 188–208 (IVVFVVFFLVLKGLYLLLYAL), 265–285 (HIPNLIISCTVALIIGTLIGI), 290–310 (FLWIAIVQIVVNCAIFLYDFF), 379–399 (SFAQQVFDFLILALGIIGIIE), and 402–422 (YTLAFLFYIFSIQALFSAYAT). Residues 464–660 (INLNNCSITL…INLSPYLQQT (197 aa)) form the ABC transporter domain. ATP is bound at residue 494–501 (GENGSGKS).

It belongs to the ABC transporter superfamily.

It localises to the cell membrane. This is Putative ABC transporter ATP-binding MG390 homolog from Mycoplasma pneumoniae (strain ATCC 29342 / M129 / Subtype 1) (Mycoplasmoides pneumoniae).